We begin with the raw amino-acid sequence, 427 residues long: Large ribosomal subunit protein uL4 (427 aa).

The residue at position 2 (Ala2) is an N-acetylalanine. The residue at position 14 (Lys14) is an N6-acetyllysine. An Omega-N-methylarginine modification is found at Arg97. Position 106 is an N6-acetyllysine (Lys106). Lys239 is covalently cross-linked (Glycyl lysine isopeptide (Lys-Gly) (interchain with G-Cter in SUMO2)). Residue Lys259 is modified to N6-acetyllysine. Thr266 carries the post-translational modification Phosphothreonine. Phosphoserine is present on residues Ser290 and Ser295. Arg300 bears the Citrulline mark. Lys327 participates in a covalent cross-link: Glycyl lysine isopeptide (Lys-Gly) (interchain with G-Cter in SUMO2). N6-acetyllysine occurs at positions 333 and 353. Position 364 is an N6-acetyllysine; alternate (Lys364). Lys364 is covalently cross-linked (Glycyl lysine isopeptide (Lys-Gly) (interchain with G-Cter in SUMO1); alternate). Ser365 carries the post-translational modification Phosphoserine. Positions 369 to 427 are disordered; sequence AAVAGKKPVVGKKGKKAAVGVKKQKKPLVGKKAAATKKPAPEKKPAEKKPTTEEKKPAA. Basic residues predominate over residues 377 to 397; it reads VVGKKGKKAAVGVKKQKKPLV. Positions 407-427 are enriched in basic and acidic residues; that stretch reads PAPEKKPAEKKPTTEEKKPAA.

Belongs to the universal ribosomal protein uL4 family. In terms of assembly, component of the large ribosomal subunit. May bind IPO9 with low affinity. Interacts with RBM3. Post-translationally, citrullinated by PADI4.

It localises to the cytoplasm. Its function is as follows. Component of the large ribosomal subunit. The ribosome is a large ribonucleoprotein complex responsible for the synthesis of proteins in the cell. The protein is Large ribosomal subunit protein uL4 (RPL4) of Homo sapiens (Human).